Reading from the N-terminus, the 1377-residue chain is DNA-directed RNA polymerase subunit beta (1377 aa).

It belongs to the RNA polymerase beta chain family. As to quaternary structure, the RNAP catalytic core consists of 2 alpha, 1 beta, 1 beta' and 1 omega subunit. When a sigma factor is associated with the core the holoenzyme is formed, which can initiate transcription.

It catalyses the reaction RNA(n) + a ribonucleoside 5'-triphosphate = RNA(n+1) + diphosphate. Its function is as follows. DNA-dependent RNA polymerase catalyzes the transcription of DNA into RNA using the four ribonucleoside triphosphates as substrates. The chain is DNA-directed RNA polymerase subunit beta from Aromatoleum aromaticum (strain DSM 19018 / LMG 30748 / EbN1) (Azoarcus sp. (strain EbN1)).